Reading from the N-terminus, the 393-residue chain is MEQCACVERELDKVLQKFLTYGQHCERSLEELLHYVGQLRAELASAALQGTPLSATLSLVMSQCCRKIKDTVQKLASDHKDIHSSVSRVGKAIDRNFDSEICGVVSDAVWDAREQQQQILQMAIVEHLYQQGMLSVAEELCQESTLNVDLDFKQPFLELNRILEALHEQDLGPALEWAVSHRQRLLELNSSLEFKLHRLHFIRLLAGGPAKQLEALSYARHFQPFARLHQREIQVMMGSLVYLRLGLEKSPYCHLLDSSHWAEICETFTRDACSLLGLSVESPLSVSFASGCVALPVLMNIKAVIEQRQCTGVWNHKDELPIEIELGMKCWYHSVFACPILRQQTSDSNPPIKLICGHVISRDALNKLINGGKLKCPYCPMEQNPADGKRIIF.

An N-acetylmethionine modification is found at M1. A LisH domain is found at 116–148 (QQQILQMAIVEHLYQQGMLSVAEELCQESTLNV). The CTLH domain occupies 155-212 (PFLELNRILEALHEQDLGPALEWAVSHRQRLLELNSSLEFKLHRLHFIRLLAGGPAKQ). The RING-Gid-type zinc finger occupies 338 to 379 (CPILRQQTSDSNPPIKLICGHVISRDALNKLINGGKLKCPYC).

Identified in the CTLH complex that contains GID4, RANBP9 and/or RANBP10, MKLN1, MAEA, RMND5A (or alternatively its paralog RMND5B), GID8, ARMC8, WDR26 and YPEL5. Within this complex, MAEA, RMND5A (or alternatively its paralog RMND5B), GID8, WDR26, and RANBP9 and/or RANBP10 form the catalytic core, while GID4, MKLN1, ARMC8 and YPEL5 have ancillary roles.

The protein resides in the cytoplasm. It is found in the cytosol. The catalysed reaction is S-ubiquitinyl-[E2 ubiquitin-conjugating enzyme]-L-cysteine + [acceptor protein]-L-lysine = [E2 ubiquitin-conjugating enzyme]-L-cysteine + N(6)-ubiquitinyl-[acceptor protein]-L-lysine.. Core component of the CTLH E3 ubiquitin-protein ligase complex that selectively accepts ubiquitin from UBE2H and mediates ubiquitination and subsequent proteasomal degradation of the transcription factor HBP1. MAEA and RMND5A are both required for catalytic activity of the CTLH E3 ubiquitin-protein ligase complex. Catalytic activity of the complex is required for normal cell proliferation. The CTLH E3 ubiquitin-protein ligase complex is not required for the degradation of enzymes involved in gluconeogenesis, such as FBP1. This Homo sapiens (Human) protein is E3 ubiquitin-protein transferase RMND5B (RMND5B).